The primary structure comprises 985 residues: MKILTYNQLQEAFRDYAPRDFAVSRDDAFRVMRIYYNEGGGNLVAFCNAQLGGRLAQFYFVMKMDLYSYKPCHNSHIFATCRNRCSSYNTFVAPGVKNVYMDKINVIKFKRNGSSFGEKTMALDKFLHNANRVHMQTPVIEGTYLRFRRAQRCRNNCVADDARPFALERFSDDFEVLDPSTLTTNIAPVMACYDIETHSDGHNSSKPECDVIMCIGLAVFKNDRFEKVCFVYHSEAVEIPQASDDTYVVVFNNENHMITAFFEFLKTVNPDVILDYNGDVFDLPYIRGRLKGDKPLLRRYDLPAMQPNTKLFITKIGNRTDTYYFNYYIHIDLYKYFGVDANKRDVENFQLNTLSQYYLGDAKVDLNWQTMVEMYNNKQLGTIIKYNVQDCLLPIRLFNKLKLTDFMYSQCIMYRLCTDDFICNISHLISSTFFHLALTNTRADPATGLTVSDPYFFNKDDLGLMSSKGSAGLTTGMSRLRRRRIPLKDVPATAIRLGAIDENVKYEGGKVLQPRAGVYEFAFSLDFNSLYLTIMIDICACLTNLILCEDGNVYLNQDKQAINVQLLLQLLKQRSELKKCRDSQTESEFLYDLYDQMQNLSKRTANSIYGYYGIFCKLLANHITRVGREKLTAAIGTVEGLSNDPDLLREFGLSTLTFKVLYGDTDSTFVLPVFRREEIPEEGRMATLGRICAAVEARVNGLFTNGYKMAFENLMSVLILLKKKKYCYINNNNKIVFKGWLVKKDMPVFMRVAFRAAIEQVLRHQDLSKCLDSLKANMLMYLDAFGITKPLTDYSFSMTYNDGAGKTAADDDEAAPPKRRVITVARHCREILVNKATDFVPGNGDRIPYVLLDMQGNVTQKAYPLRLFDAQTMRISWLKHMTILNTFMNELLEIFGDEHKDALAECYSAILEKYMQHQAYDKKRAALVKIATKRKAPSASDASGKRARKGAAPSDDESGSSEDEDAPCEPKCANNTFKFCLYKAQ.

Positions Ala-936 to Cys-972 are disordered. Residues Ser-954–Pro-967 show a composition bias toward acidic residues.

It belongs to the DNA polymerase type-B family.

It catalyses the reaction DNA(n) + a 2'-deoxyribonucleoside 5'-triphosphate = DNA(n+1) + diphosphate. Replicates the viral genome, host DNA polymerases cannot substitute for the viral enzyme in this process. The sequence is that of DNA polymerase (POL) from Orgyia pseudotsugata (Douglas-fir tussock moth).